We begin with the raw amino-acid sequence, 245 residues long: uncharacterized protein (245 aa).

Residues 1 to 19 form the signal peptide; it reads MKLTQFISYAILSLSGVQA.

It localises to the secreted. This is an uncharacterized protein from Arthroderma benhamiae (strain ATCC MYA-4681 / CBS 112371) (Trichophyton mentagrophytes).